A 455-amino-acid polypeptide reads, in one-letter code: tRNA modification GTPase MnmE (455 aa).

Residues R24, E81, and K120 each contribute to the (6S)-5-formyl-5,6,7,8-tetrahydrofolate site. A TrmE-type G domain is found at 216–378 (GMTVVIAGRP…LREHLKACMG (163 aa)). N226 contacts K(+). GTP contacts are provided by residues 226–231 (NAGKSS), 245–251 (TDIAGTT), 270–273 (DTAG), 335–338 (NKAD), and 359–361 (SAR). Residue S230 participates in Mg(2+) binding. Residues T245, I247, and T250 each contribute to the K(+) site. T251 provides a ligand contact to Mg(2+). K455 serves as a coordination point for (6S)-5-formyl-5,6,7,8-tetrahydrofolate.

The protein belongs to the TRAFAC class TrmE-Era-EngA-EngB-Septin-like GTPase superfamily. TrmE GTPase family. As to quaternary structure, homodimer. Heterotetramer of two MnmE and two MnmG subunits. It depends on K(+) as a cofactor.

The protein resides in the cytoplasm. Functionally, exhibits a very high intrinsic GTPase hydrolysis rate. Involved in the addition of a carboxymethylaminomethyl (cmnm) group at the wobble position (U34) of certain tRNAs, forming tRNA-cmnm(5)s(2)U34. This is tRNA modification GTPase MnmE from Pseudomonas aeruginosa (strain UCBPP-PA14).